Consider the following 459-residue polypeptide: Bifunctional protein GlmU (459 aa).

The tract at residues 1–228 is pyrophosphorylase; the sequence is MNFKAIILAA…IEELMGVNSR (228 aa). Residues 8 to 11, Lys22, Gln72, and 77 to 78 contribute to the UDP-N-acetyl-alpha-D-glucosamine site; these read LAAG and GT. Asp101 contacts Mg(2+). Gly138, Glu153, Asn168, and Asn226 together coordinate UDP-N-acetyl-alpha-D-glucosamine. Asn226 is a binding site for Mg(2+). The tract at residues 229 to 249 is linker; it reads VELSKAEEIMRRRINESHMVN. Residues 250-459 are N-acetyltransferase; the sequence is GVTIIDTNST…KKNQKDDQSK (210 aa). UDP-N-acetyl-alpha-D-glucosamine-binding residues include Arg331 and Lys349. His361 (proton acceptor) is an active-site residue. Tyr364 and Asn375 together coordinate UDP-N-acetyl-alpha-D-glucosamine. Residues 384–385, Ser403, Thr421, and Arg438 contribute to the acetyl-CoA site; that span reads NY.

It in the N-terminal section; belongs to the N-acetylglucosamine-1-phosphate uridyltransferase family. The protein in the C-terminal section; belongs to the transferase hexapeptide repeat family. Homotrimer. Mg(2+) is required as a cofactor.

It localises to the cytoplasm. It catalyses the reaction alpha-D-glucosamine 1-phosphate + acetyl-CoA = N-acetyl-alpha-D-glucosamine 1-phosphate + CoA + H(+). It carries out the reaction N-acetyl-alpha-D-glucosamine 1-phosphate + UTP + H(+) = UDP-N-acetyl-alpha-D-glucosamine + diphosphate. It participates in nucleotide-sugar biosynthesis; UDP-N-acetyl-alpha-D-glucosamine biosynthesis; N-acetyl-alpha-D-glucosamine 1-phosphate from alpha-D-glucosamine 6-phosphate (route II): step 2/2. Its pathway is nucleotide-sugar biosynthesis; UDP-N-acetyl-alpha-D-glucosamine biosynthesis; UDP-N-acetyl-alpha-D-glucosamine from N-acetyl-alpha-D-glucosamine 1-phosphate: step 1/1. It functions in the pathway bacterial outer membrane biogenesis; LPS lipid A biosynthesis. Catalyzes the last two sequential reactions in the de novo biosynthetic pathway for UDP-N-acetylglucosamine (UDP-GlcNAc). The C-terminal domain catalyzes the transfer of acetyl group from acetyl coenzyme A to glucosamine-1-phosphate (GlcN-1-P) to produce N-acetylglucosamine-1-phosphate (GlcNAc-1-P), which is converted into UDP-GlcNAc by the transfer of uridine 5-monophosphate (from uridine 5-triphosphate), a reaction catalyzed by the N-terminal domain. In Clostridioides difficile (strain 630) (Peptoclostridium difficile), this protein is Bifunctional protein GlmU.